Here is a 440-residue protein sequence, read N- to C-terminus: Argininosuccinate lyase (440 aa).

It belongs to the lyase 1 family. Argininosuccinate lyase subfamily.

It is found in the cytoplasm. The catalysed reaction is 2-(N(omega)-L-arginino)succinate = fumarate + L-arginine. The protein operates within amino-acid biosynthesis; L-arginine biosynthesis; L-arginine from L-ornithine and carbamoyl phosphate: step 3/3. The sequence is that of Argininosuccinate lyase from Clostridium botulinum (strain Loch Maree / Type A3).